We begin with the raw amino-acid sequence, 62 residues long: uncharacterized protein (62 aa).

This is an uncharacterized protein from Solanum tuberosum (Potato).